We begin with the raw amino-acid sequence, 487 residues long: UPF0324 membrane protein NE0724 (487 aa).

The next 11 helical transmembrane spans lie at 19-38 (WAVW…LWGW), 71-93 (PALS…AWSM), 100-119 (FFIG…IIGN), 139-161 (LSLG…GNFF), 181-200 (AIVF…AGFI), 204-226 (VMTG…YALG), 269-291 (VSIL…YTAI), 350-369 (IWID…VWVY), 389-411 (FPKF…SSGS), 426-443 (GPMR…IGII), and 456-478 (ALLY…AWIF).

It belongs to the UPF0324 family.

It localises to the cell membrane. The polypeptide is UPF0324 membrane protein NE0724 (Nitrosomonas europaea (strain ATCC 19718 / CIP 103999 / KCTC 2705 / NBRC 14298)).